Here is a 929-residue protein sequence, read N- to C-terminus: LPS-assembly protein LptD (929 aa).

Positions 1-24 (MKLRFIRSAGWLFLLFCLACNARA) are cleaved as a signal peptide. The disordered stretch occupies residues 26 to 208 (LPPLSSKPEQ…EAGDEKLRLA (183 aa)). A compositionally biased stretch (basic and acidic residues) spans 44–74 (GDDKPVVIDTERIRGHHEYESGTRSESELRS). Residues 154–164 (RTQSAPRTLSA) show a composition bias toward polar residues. Over residues 181 to 208 (DQDRPGFAEGERIGGHREEAGDEKLRLA) the composition is skewed to basic and acidic residues.

Belongs to the LptD family. As to quaternary structure, component of the lipopolysaccharide transport and assembly complex. Interacts with LptE and LptA.

The protein localises to the cell outer membrane. Functionally, together with LptE, is involved in the assembly of lipopolysaccharide (LPS) at the surface of the outer membrane. In Nitrosospira multiformis (strain ATCC 25196 / NCIMB 11849 / C 71), this protein is LPS-assembly protein LptD.